Reading from the N-terminus, the 296-residue chain is MPKLSQIVADMKQAIDAKDEAQIAFIASEYSADARQRIAQGYRDQYGKELPDDIKKALKGGSEESLLMDLFSDRHEVRAQHIRDALSGKNDHMAFFDTVILCTPEDWHETVAAYTRMFKKPLVEDFMKDVGRKENWCLFMEKWMAHERTSREGSPDEEAEKLNKAFSESDHDYISSFMAGVPPEEYKSINTSFKSLTGKGIDQAFATIYTGTDYYSLYCAHFALLGMHKLAAYLVNCACNDKGDEKRMRRITGMMVDKCLAAKYAYKTYGSMKADVERCFDKRMAPILCTLWRLRE.

Annexin repeat units lie at residues 2–71 (PKLS…MDLF), 73–143 (DRHE…MEKW), 153–223 (GSPD…AHFA), and 226–293 (GMHK…TLWR).

This sequence belongs to the annexin family. Giardin subunit alpha subfamily.

It localises to the cytoplasm. The protein resides in the cytoskeleton. Functionally, giardins are involved in parasite attachment to the intestinal mucosa and in the cytoskeletal disassembly and reassembly that marks the transition from infectious trophozoite to transmissible cyst. They may interact with other cytoskeletal proteins such as microtubules in the microribbons or crossbridges, to maintain the integrity of the ventral disk. This Giardia intestinalis (Giardia lamblia) protein is Giardin subunit alpha-2.